The primary structure comprises 568 residues: Pyruvate carboxylase subunit B (568 aa).

A Pyruvate carboxyltransferase domain is found at 4–264; the sequence is IKVVETAFRD…DTGLDLEILK (261 aa). Substrate-binding positions include 12–16 and R83; that span reads RDAHQ. D13 is a binding site for a divalent metal cation. A divalent metal cation-binding residues include K174, H203, and H205. Residue K174 is modified to N6-carboxylysine. Residue T339 coordinates substrate. One can recognise a Biotinyl-binding domain in the interval 493-568; sequence PEPVDVEGAV…ETGDIIMVIK (76 aa). N6-biotinyllysine is present on K534.

As to quaternary structure, heterooctamer of four A and four B subunits. It depends on Mg(2+) as a cofactor. Mn(2+) is required as a cofactor. The cofactor is Co(2+).

It carries out the reaction hydrogencarbonate + pyruvate + ATP = oxaloacetate + ADP + phosphate + H(+). Its activity is regulated as follows. Inhibited by ADP and alpha-ketoglutarate. Pyruvate carboxylase catalyzes a 2-step reaction, involving the ATP-dependent carboxylation of the covalently attached biotin in the first step and the transfer of the carboxyl group to pyruvate in the second. This chain is Pyruvate carboxylase subunit B (pycB), found in Methanothermobacter thermautotrophicus (strain ATCC 29096 / DSM 1053 / JCM 10044 / NBRC 100330 / Delta H) (Methanobacterium thermoautotrophicum).